The chain runs to 305 residues: Autophagy-related protein 27 (305 aa).

The N-terminal stretch at 1 to 22 (MARYKGLSILSLFAVFSSLASA) is a signal peptide. The Lumenal segment spans residues 23–242 (ELDCSNIKVD…EDGGSAPSGH (220 aa)). An MRH domain is found at 24 to 231 (LDCSNIKVDG…EWKTKYACEN (208 aa)). 2 cysteine pairs are disulfide-bonded: C26-C66 and C74-C81. N-linked (GlcNAc...) asparagine glycosylation occurs at N58. The N-linked (GlcNAc...) asparagine glycan is linked to N85. Residues C156 and C229 are joined by a disulfide bond. Residues 163–202 (LEGLESPKPDGDKKKDGEKKDDDKKDNKDKEGKSKRDGEE) are disordered. Residues 243–263 (WGFFTWVIVLYVVLVSLPLLS) form a helical membrane-spanning segment. The Cytoplasmic segment spans residues 264-305 (ERVTNVRCHSQPVPVHFGLSDIRLVAQLQPVWSSRVGLASSQ).

This sequence belongs to the ATG27 family.

The protein resides in the cytoplasmic vesicle membrane. The protein localises to the golgi apparatus membrane. Its subcellular location is the mitochondrion membrane. It localises to the preautophagosomal structure membrane. In terms of biological role, effector of phosphatidylinositol 3-phosphate kinase signaling. Regulates the cytoplasm to vacuole transport (Cvt) vesicle formation. Plays a role in ATG protein retrieval from the pre-autophagosomal structure (PAS). The polypeptide is Autophagy-related protein 27 (Arthroderma benhamiae (strain ATCC MYA-4681 / CBS 112371) (Trichophyton mentagrophytes)).